The following is an 84-amino-acid chain: Small ribosomal subunit protein bS16 (84 aa).

It belongs to the bacterial ribosomal protein bS16 family.

The protein is Small ribosomal subunit protein bS16 of Acaryochloris marina (strain MBIC 11017).